The primary structure comprises 98 residues: Flagellar hook-basal body complex protein FliE (98 aa).

The segment at 22-56 (KTDNATGAGNTFTQMLDSMSDTQSNAQTSVSNLLT) is disordered. Residues 23-56 (TDNATGAGNTFTQMLDSMSDTQSNAQTSVSNLLT) show a composition bias toward polar residues.

This sequence belongs to the FliE family.

It is found in the bacterial flagellum basal body. This Listeria innocua serovar 6a (strain ATCC BAA-680 / CLIP 11262) protein is Flagellar hook-basal body complex protein FliE.